A 498-amino-acid chain; its full sequence is Probable malate:quinone oxidoreductase (498 aa).

This sequence belongs to the MQO family. The cofactor is FAD.

It carries out the reaction (S)-malate + a quinone = a quinol + oxaloacetate. The protein operates within carbohydrate metabolism; tricarboxylic acid cycle; oxaloacetate from (S)-malate (quinone route): step 1/1. The chain is Probable malate:quinone oxidoreductase from Prochlorococcus marinus (strain MIT 9301).